Here is a 149-residue protein sequence, read N- to C-terminus: HMG1/2-like protein (149 aa).

2 stretches are compositionally biased toward basic and acidic residues: residues 1–15 (MKGGKSKGESKKAET) and 35–44 (KGKEPKDPNK). Disordered regions lie at residues 1-52 (MKGG…PSAF) and 112-149 (AYNKKLEGKDDEEGSDKSKSEVNDEDEDEEDEEDEDDD). The HMG box DNA-binding region spans 45–114 (PKRPPSAFFV…EYEITLQAYN (70 aa)). Acidic residues predominate over residues 134-149 (NDEDEDEEDEEDEDDD).

This sequence belongs to the HMGB family.

Its subcellular location is the nucleus. The protein is HMG1/2-like protein of Vicia faba (Broad bean).